The chain runs to 432 residues: Homogentisate 1,2-dioxygenase (432 aa).

The Proton acceptor role is filled by H287. H330 and E336 together coordinate Fe cation. Homogentisate is bound by residues Y345 and H366. Residue H366 participates in Fe cation binding.

This sequence belongs to the homogentisate dioxygenase family. Hexamer; dimer of trimers. Requires Fe cation as cofactor.

It carries out the reaction homogentisate + O2 = 4-maleylacetoacetate + H(+). It functions in the pathway amino-acid degradation; L-phenylalanine degradation; acetoacetate and fumarate from L-phenylalanine: step 4/6. In terms of biological role, involved in the catabolism of homogentisate (2,5-dihydroxyphenylacetate or 2,5-OH-PhAc), a central intermediate in the degradation of phenylalanine and tyrosine. Catalyzes the oxidative ring cleavage of the aromatic ring of homogentisate to yield maleylacetoacetate. The protein is Homogentisate 1,2-dioxygenase of Pseudomonas aeruginosa (strain UCBPP-PA14).